Here is a 414-residue protein sequence, read N- to C-terminus: Testis-specific Y-encoded-like protein 4 (414 aa).

Disordered regions lie at residues Met1–Lys129 and Pro391–Gly414. A compositionally biased stretch (basic and acidic residues) spans Ala24–Thr40. Over residues Glu101 to Ser112 the composition is skewed to low complexity.

The protein belongs to the nucleosome assembly protein (NAP) family.

The polypeptide is Testis-specific Y-encoded-like protein 4 (TSPYL4) (Homo sapiens (Human)).